The following is a 130-amino-acid chain: DUF35 domain-containing scaffold protein (130 aa).

Residues cysteine 20, cysteine 23, cysteine 34, and cysteine 37 each coordinate Zn(2+).

The protein belongs to the scaffold protein DUF35 family. Interacts with acetoacetyl-CoA thiolase and HMG-CoA synthase (HMGCS) that catalyzes the first and second step in the mevalonate pathway, respectively.

Its function is as follows. Functions as a scaffold to connect the acetoacetyl-CoA thiolase and HMG-CoA synthase (HMGCS) dimers in the channeling thiolase/HMGCS complex, which allows for efficient coupling of the endergonic thiolase reaction with the exergonic HMGCS reaction. This Methanothermococcus thermolithotrophicus (Methanococcus thermolithotrophicus) protein is DUF35 domain-containing scaffold protein.